The chain runs to 132 residues: Small integral membrane protein 33 (132 aa).

Residues 1-28 (MHQAGHYSWPSPAVNSSSEQEPQRQLPE) are disordered. Residue N15 is glycosylated (N-linked (GlcNAc...) asparagine). A helical membrane pass occupies residues 43–63 (PVVTVIVAVFVLLAVCIIVAV). The interval 99–132 (PQDSPEEAPPGPLVPGSCPAPDGPRPSIDEVTCL) is disordered.

It is found in the membrane. This chain is Small integral membrane protein 33, found in Homo sapiens (Human).